Consider the following 372-residue polypeptide: Queuine tRNA-ribosyltransferase (372 aa).

Asp-92 acts as the Proton acceptor in catalysis. Substrate-binding positions include 92–96, Asp-146, Gln-188, and Gly-215; that span reads DSGGF. Residues 246 to 252 form an RNA binding region; it reads GIGTLRE. Catalysis depends on Asp-265, which acts as the Nucleophile. The tract at residues 270–274 is RNA binding; important for wobble base 34 recognition; that stretch reads TRLGR. Cys-303, Cys-305, Cys-308, and His-334 together coordinate Zn(2+).

Belongs to the queuine tRNA-ribosyltransferase family. In terms of assembly, homodimer. Within each dimer, one monomer is responsible for RNA recognition and catalysis, while the other monomer binds to the replacement base PreQ1. Zn(2+) serves as cofactor.

It carries out the reaction 7-aminomethyl-7-carbaguanine + guanosine(34) in tRNA = 7-aminomethyl-7-carbaguanosine(34) in tRNA + guanine. Its pathway is tRNA modification; tRNA-queuosine biosynthesis. Its function is as follows. Catalyzes the base-exchange of a guanine (G) residue with the queuine precursor 7-aminomethyl-7-deazaguanine (PreQ1) at position 34 (anticodon wobble position) in tRNAs with GU(N) anticodons (tRNA-Asp, -Asn, -His and -Tyr). Catalysis occurs through a double-displacement mechanism. The nucleophile active site attacks the C1' of nucleotide 34 to detach the guanine base from the RNA, forming a covalent enzyme-RNA intermediate. The proton acceptor active site deprotonates the incoming PreQ1, allowing a nucleophilic attack on the C1' of the ribose to form the product. After dissociation, two additional enzymatic reactions on the tRNA convert PreQ1 to queuine (Q), resulting in the hypermodified nucleoside queuosine (7-(((4,5-cis-dihydroxy-2-cyclopenten-1-yl)amino)methyl)-7-deazaguanosine). This is Queuine tRNA-ribosyltransferase from Synechococcus sp. (strain CC9902).